Consider the following 133-residue polypeptide: MIQQQSRLSVADNTGARELLCIRVLGSTVGSKGLTKGGGNRRYAFVGDIVVAVVKDAAPNMGVKKSEVVRAVVVRTRQAIRRDNGMVIRFDDNAAVIIDKNGNPRGTRVFGPVARELREKNFTKIISLAPEVL.

Belongs to the universal ribosomal protein uL14 family. As to quaternary structure, part of the 50S ribosomal subunit. Forms a cluster with proteins L3 and L19. In the 70S ribosome, L14 and L19 interact and together make contacts with the 16S rRNA in bridges B5 and B8.

Binds to 23S rRNA. Forms part of two intersubunit bridges in the 70S ribosome. The protein is Large ribosomal subunit protein uL14 of Gloeobacter violaceus (strain ATCC 29082 / PCC 7421).